A 506-amino-acid chain; its full sequence is Aldehyde dehydrogenase [NAD(P)+] 1 (506 aa).

Glu-268 (proton acceptor) is an active-site residue. The Nucleophile role is filled by Cys-302.

The protein belongs to the aldehyde dehydrogenase family.

It is found in the cytoplasm. It carries out the reaction an aldehyde + NAD(+) + H2O = a carboxylate + NADH + 2 H(+). The enzyme catalyses 3-aminopropanal + NAD(+) + H2O = beta-alanine + NADH + 2 H(+). Its function is as follows. Cytoplasmic aldehyde dehydrogenase involved in ethanol oxidation. Required for pantothenic acid production through the conversion of 3-aminopropanal to beta-alanine, an intermediate in pantothenic acid (vitamin B5) and coenzyme A (CoA) biosynthesis. The polypeptide is Aldehyde dehydrogenase [NAD(P)+] 1 (ALD2) (Saccharomyces cerevisiae (strain ATCC 204508 / S288c) (Baker's yeast)).